A 92-amino-acid polypeptide reads, in one-letter code: Large ribosomal subunit protein uL24 (92 aa).

The protein belongs to the universal ribosomal protein uL24 family. Part of the 50S ribosomal subunit.

Its function is as follows. One of two assembly initiator proteins, it binds directly to the 5'-end of the 23S rRNA, where it nucleates assembly of the 50S subunit. In terms of biological role, one of the proteins that surrounds the polypeptide exit tunnel on the outside of the subunit. The polypeptide is Large ribosomal subunit protein uL24 (Opitutus terrae (strain DSM 11246 / JCM 15787 / PB90-1)).